Consider the following 1358-residue polypeptide: Insulin-like growth factor 1 receptor (1358 aa).

The first 25 residues, 1-25 (MKAELVPVCTAWILGLLLCLGPAAA), serve as a signal peptide directing secretion. Cysteines 28 and 47 form a disulfide. 3 N-linked (GlcNAc...) asparagine glycosylation sites follow: N74, N99, and N132. 13 cysteine pairs are disulfide-bonded: C147–C175, C179–C202, C189–C208, C212–C221, C216–C227, C228–C236, C232–C245, C248–C257, C261–C273, C279–C299, C303–C317, C320–C324, and C328–C347. An N-linked (GlcNAc...) asparagine glycan is attached at N241. N-linked (GlcNAc...) asparagine glycosylation occurs at N310. 2 N-linked (GlcNAc...) asparagine glycosylation sites follow: N411 and N432. A disulfide bond links C449 and C482. Fibronectin type-III domains are found at residues 483–603 (ESHV…TDAA), 604–702 (VPSI…TEAE), 727–818 (PRPN…FVFA), and 829–924 (IPGI…LKPD). 5 N-linked (GlcNAc...) asparagine glycosylation sites follow: N488, N528, N616, N634, and N669. A disordered region spans residues 670 to 691 (GTIDTEGGTEPTKPEGSVGEKG). The Extracellular segment spans residues 735 to 934 (DVLAVGNSTV…VRNNILQMVV (200 aa)). N-linked (GlcNAc...) asparagine glycosylation is found at N741, N750, N758, N895, and N908. Residues 935-955 (AIPLALSFLLVGIISIVCFVF) form a helical membrane-spanning segment. The Cytoplasmic portion of the chain corresponds to 956–1358 (KKRNSNRLGN…ALPLPQSSAC (403 aa)). At Y976 the chain carries Phosphotyrosine; by autocatalysis. Residues 995–1270 (ITMNRELGQG…SIKDELDPGF (276 aa)) enclose the Protein kinase domain. ATP is bound by residues 1001–1009 (LGQGSFGMV) and K1029. D1131 functions as the Proton acceptor in the catalytic mechanism. Y1157, Y1161, and Y1162 each carry phosphotyrosine; by autocatalysis. A disordered region spans residues 1336-1358 (PYAHMNGGRKNERALPLPQSSAC).

This sequence belongs to the protein kinase superfamily. Tyr protein kinase family. Insulin receptor subfamily. In terms of assembly, tetramer of 2 alpha and 2 beta chains linked by disulfide bonds. The alpha chains contribute to the formation of the ligand-binding domain, while the beta chain carries the kinase domain. Requires Mn(2+) as cofactor. In terms of processing, the cytoplasmic domain of the beta subunit is autophosphorylated on Tyr residues in response to low concentrations of insulin-like growth factor (IGF1) and higher concentrations of insulin.

The protein localises to the cell membrane. It carries out the reaction L-tyrosyl-[protein] + ATP = O-phospho-L-tyrosyl-[protein] + ADP + H(+). With respect to regulation, autophosphorylation activates the kinase activity. Functionally, this receptor binds insulin-like growth factor 1 (IGF1) with a high affinity and IGF2 with a lower affinity. It has a tyrosine-protein kinase activity, which is necessary for the activation of the IGF1-stimulated downstream signaling cascade. Plays a role in oocyte maturation. Promotes head development by inhibiting Wnt signaling during embryogenesis. The polypeptide is Insulin-like growth factor 1 receptor (igf1r) (Xenopus laevis (African clawed frog)).